The following is a 217-amino-acid chain: Adapter protein MecA (217 aa).

It belongs to the MecA family. Homodimer.

Its function is as follows. Enables the recognition and targeting of unfolded and aggregated proteins to the ClpC protease or to other proteins involved in proteolysis. The polypeptide is Adapter protein MecA (Listeria innocua serovar 6a (strain ATCC BAA-680 / CLIP 11262)).